A 4882-amino-acid polypeptide reads, in one-letter code: Dual E2 ubiquitin-conjugating enzyme/E3 ubiquitin-protein ligase BIRC6 (4882 aa).

2 WD repeats span residues 71–109 (DGLH…QASA) and 110–139 (LSAK…AVGC). A BIR repeat occupies 292-362 (RRETFTSWPH…RHSPNCPFVK (71 aa)). Zn(2+) contacts are provided by cysteine 331, cysteine 334, histidine 351, and cysteine 358. Residues 382 to 429 (LPSADGADRIACFGSGSCPQFLAAATKRGKICIWDVSKLMKVHLKFEI) form a WD 3 repeat. 3 disordered regions span residues 468-502 (DIPK…SQKE), 542-561 (GANP…KHQE), and 582-622 (ATSP…SELN). Acidic residues predominate over residues 475-485 (DSDDLLEDSDS). Phosphoserine occurs at positions 476, 483, and 485. WD repeat units follow at residues 504–723 (MEVS…VQCL), 733–854 (TLCI…QHIK), 855–931 (DPQD…AKVE), and 932–970 (PPKK…FLQI). Over residues 551-561 (KSEKTKEKHQE) the composition is skewed to basic and acidic residues. Polar residues predominate over residues 582-591 (ATSPISSNSH). Phosphoserine occurs at positions 584 and 593. The span at 598-622 (SRTQGESISEQGSTDNESCTNSELN) shows a compositional bias: polar residues. The segment at 1057–1077 (QQQRRHPQHLHQQHHGDAAQH) is disordered. The span at 1060-1069 (RRHPQHLHQQ) shows a compositional bias: basic residues. Residue threonine 1724 is modified to Phosphothreonine. Phosphoserine is present on residues serine 2245 and serine 2978. A disordered region spans residues 2969-2998 (VTTNTTDSVSDEEKVSGGKDVNGSSASTPG). Residues 3212–3216 (HRRAR) form an HRRAR loop; important for DIABLO/SMAC and HTRA2 binding region. Residues 3842 to 4092 (DEKVTMFLQS…ESLLETCPIQ (251 aa)) form the Ubiquitin-like domain. Disordered regions lie at residues 3908–3927 (SEQK…KVKA) and 3943–3973 (LKSQ…IGSA). Residue threonine 3954 is modified to Phosphothreonine. Serine 4047 carries the phosphoserine modification. The segment at 4285-4304 (VPNSSLSQTEPQVSNSHNPT) is disordered. Residues 4286–4304 (PNSSLSQTEPQVSNSHNPT) show a composition bias toward polar residues. A UBC core domain is found at 4598 to 4765 (ARARRLAQEA…IRQATVKWAM (168 aa)). Residue cysteine 4691 is the Glycyl thioester intermediate of the active site. Positions 4857 to 4882 (AGAEDTLTHDHVNPSSSKDLPSDFQL) are disordered. Residues 4869-4882 (NPSSSKDLPSDFQL) show a composition bias toward polar residues.

It belongs to the BIRC6 family. As to quaternary structure, homodimer; antiparallel. Interacts with DIABLO/SMAC, likely with higher affinity to SMAC dimer than SMAC monomer; this interaction blocks the substrate-binding site and inhibits the caspase inhibition activity of BIRC6. Interacts with RNF41, KIF23/MKLP1, USP8/UBPY, BIRC5/survivin, MAP2K1/MEK1, RAB8A/RAB8, RAB11A/RAB11, PLK1, EXOC3/SEC6 and EXOC4/SEC8. Ubiquitinated. Ubiquitination is mediated by RNF41 E3 ligase and leads to proteasomal degradation, impairing inhibition of apoptosis. Deubiquitinated by USP8/UBPY. Autoubiquitinated; mediated by E1 ubiquitin activating enzyme UBA6. In terms of processing, proteolytically cleaved. Acts as substrate for CASP3, CASP6, CASP7, CASP9 and HTRA2. Widely expressed. Highly expressed in the brain and kidney.

It localises to the golgi apparatus. The protein resides in the trans-Golgi network membrane. It is found in the endosome. The protein localises to the cytoplasm. Its subcellular location is the cytoskeleton. It localises to the spindle pole. The protein resides in the microtubule organizing center. It is found in the centrosome. The protein localises to the midbody. Its subcellular location is the midbody ring. The catalysed reaction is S-ubiquitinyl-[E1 ubiquitin-activating enzyme]-L-cysteine + [acceptor protein]-L-lysine = [E1 ubiquitin-activating enzyme]-L-cysteine + N(6)-monoubiquitinyl-[acceptor protein]-L-lysine.. With respect to regulation, inhibited by DIABLO/SMAC, which competes for the substrate-binding sites on BIRC6. BIRC6 inhibits caspases and protease by ubiquitination but BIRC6 itself is subjected to protease cleavage by CASP3, CASP6, CASP7, CASP9 and HTRA2 by protease cleavage. Anti-apoptotic protein known as inhibitor of apoptosis (IAP) which can regulate cell death by controlling caspases and by acting as an E3 ubiquitin-protein ligase. Unlike most IAPs, does not contain a RING domain and it is not a RING-type E3 ligase. Instead acts as a dual E2/E3 enzyme that combines ubiquitin conjugating (E2) and ubiquitin ligase (E3) activities in a single polypeptide. Ubiquitination is mediated by a non-canonical E1 ubiquitin activating enzyme UBA6. Ubiquitinates CASP3, CASP7 and CASP9 and inhibits their caspase activity; also ubiquitinates their procaspases but to a weaker extent. Ubiquitinates pro-apoptotic factors DIABLO/SMAC and HTRA2. DIABLO/SMAC antagonizes the caspase inhibition activity of BIRC6 by competing for the same binding sites as the caspases. Ubiquitinates the autophagy protein MAP1LC3B; this activity is also inhibited by DIABLO/SMAC. Important regulator for the final stages of cytokinesis. Crucial for normal vesicle targeting to the site of abscission, but also for the integrity of the midbody and the midbody ring, and its striking ubiquitin modification. Required for normal placenta development. The chain is Dual E2 ubiquitin-conjugating enzyme/E3 ubiquitin-protein ligase BIRC6 (Birc6) from Mus musculus (Mouse).